Here is a 295-residue protein sequence, read N- to C-terminus: UDP-N-acetylenolpyruvoylglucosamine reductase (295 aa).

The 166-residue stretch at 23–188 folds into the FAD-binding PCMH-type domain; it reads KVGGPADFLA…ISAKFALKPG (166 aa). The active site involves Arg-167. The Proton donor role is filled by Ser-217. Glu-287 is a catalytic residue.

It belongs to the MurB family. It depends on FAD as a cofactor.

Its subcellular location is the cytoplasm. It catalyses the reaction UDP-N-acetyl-alpha-D-muramate + NADP(+) = UDP-N-acetyl-3-O-(1-carboxyvinyl)-alpha-D-glucosamine + NADPH + H(+). The protein operates within cell wall biogenesis; peptidoglycan biosynthesis. In terms of biological role, cell wall formation. This chain is UDP-N-acetylenolpyruvoylglucosamine reductase, found in Streptococcus pyogenes serotype M12 (strain MGAS9429).